A 322-amino-acid polypeptide reads, in one-letter code: tRNA pseudouridine synthase B (322 aa).

The span at 1–11 (MRPPRTTELDR) shows a compositional bias: basic and acidic residues. Residues 1–22 (MRPPRTTELDRPMTTAASQRPR) are disordered. Asp-65 serves as the catalytic Nucleophile.

The protein belongs to the pseudouridine synthase TruB family. Type 1 subfamily.

It carries out the reaction uridine(55) in tRNA = pseudouridine(55) in tRNA. Its function is as follows. Responsible for synthesis of pseudouridine from uracil-55 in the psi GC loop of transfer RNAs. The protein is tRNA pseudouridine synthase B of Burkholderia lata (strain ATCC 17760 / DSM 23089 / LMG 22485 / NCIMB 9086 / R18194 / 383).